The sequence spans 153 residues: L-alanine exporter AlaE (153 aa).

4 helical membrane-spanning segments follow: residues 16–36 (VAMV…LSEM), 42–62 (LSSR…YGLY), 86–106 (LFAY…AIGA), and 114–134 (AVGS…YFLE).

It belongs to the AlaE exporter family.

It is found in the cell inner membrane. In terms of biological role, exports L-alanine. The chain is L-alanine exporter AlaE from Musicola paradisiaca (strain Ech703) (Dickeya paradisiaca).